A 162-amino-acid chain; its full sequence is Large ribosomal subunit protein uL15 (162 aa).

The segment covering 1–18 has biased composition (basic and acidic residues); sequence MKLNEIRDNEGATKDRMR. Residues 1–42 form a disordered region; that stretch reads MKLNEIRDNEGATKDRMRVGRGIGSGKGKTAGRGVKGQKART. The span at 21 to 35 shows a compositional bias: gly residues; sequence RGIGSGKGKTAGRGV.

The protein belongs to the universal ribosomal protein uL15 family. Part of the 50S ribosomal subunit.

Its function is as follows. Binds to the 23S rRNA. The chain is Large ribosomal subunit protein uL15 from Methylobacterium sp. (strain 4-46).